The chain runs to 201 residues: Syndecan-2 (201 aa).

An N-terminal signal peptide occupies residues 1–18 (MRRAWILLTLGLVACVSA). Residues 19–144 (ESRAELTSDK…HSDSLFKRTE (126 aa)) lie on the Extracellular side of the membrane. Residues Ser41, Ser55, and Ser57 are each glycosylated (O-linked (Xyl...) (glycosaminoglycan) serine). 2 disordered regions span residues 42–70 (GVYP…ELTT) and 90–130 (TLNI…DTNV). Residues 90–102 (TLNIQNKIPAQTK) are compositionally biased toward polar residues. An O-linked (GalNAc...) threonine glycan is attached at Thr101. Positions 103-123 (SPEETDKEKVHLSDSERKMDP) are enriched in basic and acidic residues. At Ser115 the chain carries Phosphoserine; by FAM20C. A helical membrane pass occupies residues 145–169 (VLAAVIAGGVIGFLFAIFLILLLVY). The Cytoplasmic portion of the chain corresponds to 170–201 (RMRKKDEGSYDLGERKPSSAAYQKAPTKEFYA). The segment at 178-201 (SYDLGERKPSSAAYQKAPTKEFYA) is disordered. Residue Ser187 is modified to Phosphoserine.

This sequence belongs to the syndecan proteoglycan family. As to quaternary structure, interacts (via cytoplasmic domain) with SARM1. Forms a complex with SDCBP and PDCD6IP. In terms of processing, O-glycosylated with core 1 or possibly core 8 glycans. Contains heparan sulfate. Also contains chondroitin sulfate.

The protein resides in the membrane. Cell surface proteoglycan which regulates dendritic arbor morphogenesis. This chain is Syndecan-2 (SDC2), found in Homo sapiens (Human).